The following is a 495-amino-acid chain: Amorpha-4,11-diene 12-monooxygenase (495 aa).

The Cytoplasmic portion of the chain corresponds to 1 to 6 (MKSILK). A helical; Signal-anchor for type II membrane protein transmembrane segment spans residues 7–29 (AMALSLTTSIALATILLFVYKFA). At 30–495 (TRSKSTKKSL…KTELLLVPSF (466 aa)) the chain is on the lumenal side. N-linked (GlcNAc...) asparagine glycosylation is found at Asn176, Asn261, Asn267, Asn386, and Asn417. Residue Cys439 coordinates heme.

Belongs to the cytochrome P450 family. The cofactor is heme. As to expression, highly expressed both in apical and sub-apical cells of glandular secretory trichomes. Detected in flower buds, leaves and roots. Also present in non-glandular trichome cells.

It localises to the endoplasmic reticulum membrane. The catalysed reaction is (+)-amorpha-4,11-diene + 3 reduced [NADPH--hemoprotein reductase] + 3 O2 = (+)-artemisinate + 3 oxidized [NADPH--hemoprotein reductase] + 4 H2O + 4 H(+). It functions in the pathway sesquiterpene biosynthesis. Involved in the biosynthesis of the antimalarial endoperoxide artemisinin. Catalyzes three consecutive oxidations of amorpha-4,11-diene to produce artemisinic acid, with artemisinic alcohol and artemisinic aldehyde as intermediates products, but is unable to oxidize germacrene A. No activity with limonene, alpha-pinene, beta-pinene, pinocarveol, (-)-alloisolongifolene, caryophyllene, (-)-alpha-gurjunene, (+)-gamma-gurjunene, (+)-ledene, (+)-beta-selinene and (+)-valencene as substrates. The polypeptide is Amorpha-4,11-diene 12-monooxygenase (Artemisia annua (Sweet wormwood)).